The chain runs to 172 residues: GTP-dependent dephospho-CoA kinase (172 aa).

GTP is bound by residues Asp49, Val50, Val51, Asp68, Lys70, and Glu120.

This sequence belongs to the GTP-dependent DPCK family.

The enzyme catalyses 3'-dephospho-CoA + GTP = GDP + CoA + H(+). The protein operates within cofactor biosynthesis; coenzyme A biosynthesis. In terms of biological role, catalyzes the GTP-dependent phosphorylation of the 3'-hydroxyl group of dephosphocoenzyme A to form coenzyme A (CoA). This is GTP-dependent dephospho-CoA kinase from Pyrobaculum arsenaticum (strain DSM 13514 / JCM 11321 / PZ6).